A 344-amino-acid polypeptide reads, in one-letter code: L-rhamnose-proton symporter (344 aa).

Transmembrane regions (helical) follow at residues 4-24 (AITMGIFWHLIGAASAACFYA), 38-58 (WSVGGIVSWLILPWTISALLL), 68-88 (FNLSTLLPVFLFGAMWGIGNI), 101-121 (MGIGIAIGITLIVGTLMTPII), 137-157 (TLLGVFVALIGVGIVTRAGQL), 175-195 (LLLAVMCGIFSAGMSFAMNAA), 214-234 (LPSYVVIMGGGALVNLGFCFI), 259-279 (ILLSALGGLMWYLQFFFYAWG), 290-310 (MSWMLHMSFYVLCGGLVGLVL), and 321-341 (VAVLSLGCVVIIIAANIVGLG).

Belongs to the L-rhamnose transporter (TC 2.A.7.6) family.

It is found in the cell inner membrane. It catalyses the reaction L-rhamnopyranose(in) + H(+)(in) = L-rhamnopyranose(out) + H(+)(out). Uptake of L-rhamnose across the cytoplasmic membrane with the concomitant transport of protons into the cell (symport system). This Salmonella agona (strain SL483) protein is L-rhamnose-proton symporter.